A 553-amino-acid polypeptide reads, in one-letter code: Phosphomethylpyrimidine synthase (553 aa).

Substrate contacts are provided by residues N192, M221, Y250, H286, 306 to 308 (SRG), 347 to 350 (DGLR), and E386. H390 lines the Zn(2+) pocket. A substrate-binding site is contributed by Y413. H454 contacts Zn(2+). C534, C537, and C542 together coordinate [4Fe-4S] cluster.

This sequence belongs to the ThiC family. Homodimer. The cofactor is [4Fe-4S] cluster.

The catalysed reaction is 5-amino-1-(5-phospho-beta-D-ribosyl)imidazole + S-adenosyl-L-methionine = 4-amino-2-methyl-5-(phosphooxymethyl)pyrimidine + CO + 5'-deoxyadenosine + formate + L-methionine + 3 H(+). It participates in cofactor biosynthesis; thiamine diphosphate biosynthesis. Catalyzes the synthesis of the hydroxymethylpyrimidine phosphate (HMP-P) moiety of thiamine from aminoimidazole ribotide (AIR) in a radical S-adenosyl-L-methionine (SAM)-dependent reaction. The chain is Phosphomethylpyrimidine synthase from Anaplasma marginale (strain St. Maries).